Consider the following 397-residue polypeptide: Elongation factor Tu (397 aa).

The tr-type G domain maps to Lys10 to Glu206. The tract at residues Gly19–Thr26 is G1. Gly19–Thr26 provides a ligand contact to GTP. Thr26 serves as a coordination point for Mg(2+). The G2 stretch occupies residues Gly62–Asn66. Positions Asp83–Gly86 are G3. Residues Asp83 to His87 and Asn138 to Asp141 contribute to the GTP site. A G4 region spans residues Asn138 to Asp141. The G5 stretch occupies residues Ser176–Leu178.

It belongs to the TRAFAC class translation factor GTPase superfamily. Classic translation factor GTPase family. EF-Tu/EF-1A subfamily. As to quaternary structure, monomer.

Its subcellular location is the cytoplasm. The enzyme catalyses GTP + H2O = GDP + phosphate + H(+). Its function is as follows. GTP hydrolase that promotes the GTP-dependent binding of aminoacyl-tRNA to the A-site of ribosomes during protein biosynthesis. This chain is Elongation factor Tu, found in Brevibacterium linens.